Here is an 83-residue protein sequence, read N- to C-terminus: Acid shock protein (83 aa).

The first 21 residues, 1 to 21, serve as a signal peptide directing secretion; sequence MKKVLALVVAAAMGLSSAAFA. The span at 22–40 shows a compositional bias: low complexity; sequence AETATPAKTATPAKTTQNT. Positions 22–56 are excised as a propeptide; it reads AETATPAKTATPAKTTQNTQHHKKQHKKTVEQKAQ. The segment at 22 to 83 is disordered; that stretch reads AETATPAKTA…TSKTTSQPAA (62 aa). A compositionally biased stretch (basic residues) spans 57 to 70; it reads AAKKHQKKDGKKAP. A compositionally biased stretch (low complexity) spans 71–83; the sequence is AKSTSKTTSQPAA.

It belongs to the Asr family. In terms of processing, proteolytic processing gives rise to the active protein.

It localises to the periplasm. Required for growth and/or survival at acidic conditions. The chain is Acid shock protein from Salmonella heidelberg (strain SL476).